Reading from the N-terminus, the 410-residue chain is Peptidase T (410 aa).

His-78 is a Zn(2+) binding site. Asp-80 is a catalytic residue. Asp-140 serves as a coordination point for Zn(2+). Glu-173 (proton acceptor) is an active-site residue. Glu-174, Asp-196, and His-379 together coordinate Zn(2+).

Belongs to the peptidase M20B family. It depends on Zn(2+) as a cofactor.

The protein localises to the cytoplasm. The enzyme catalyses Release of the N-terminal residue from a tripeptide.. Cleaves the N-terminal amino acid of tripeptides. In Pectobacterium atrosepticum (strain SCRI 1043 / ATCC BAA-672) (Erwinia carotovora subsp. atroseptica), this protein is Peptidase T.